A 984-amino-acid polypeptide reads, in one-letter code: Valine--tRNA ligase (984 aa).

Residues 65–75 carry the 'HIGH' region motif; the sequence is PNVTGSLHMGH. The 'KMSKS' region signature appears at 579–583; it reads KMSKS. K582 contacts ATP. Residues 954 to 984 are a coiled coil; sequence VEVVDAEKAKLAELEGQLTAMTAQMEELKNL.

The protein belongs to the class-I aminoacyl-tRNA synthetase family. ValS type 1 subfamily. Monomer.

Its subcellular location is the cytoplasm. The enzyme catalyses tRNA(Val) + L-valine + ATP = L-valyl-tRNA(Val) + AMP + diphosphate. Catalyzes the attachment of valine to tRNA(Val). As ValRS can inadvertently accommodate and process structurally similar amino acids such as threonine, to avoid such errors, it has a 'posttransfer' editing activity that hydrolyzes mischarged Thr-tRNA(Val) in a tRNA-dependent manner. This is Valine--tRNA ligase from Psychrobacter arcticus (strain DSM 17307 / VKM B-2377 / 273-4).